The following is a 211-amino-acid chain: Potassium-transporting ATPase KdpC subunit (211 aa).

The helical transmembrane segment at 13-35 (VVTMVLTGLLYPLAVTGLAQLLF) threads the bilayer.

The protein belongs to the KdpC family. In terms of assembly, the system is composed of three essential subunits: KdpA, KdpB and KdpC.

It localises to the cell inner membrane. In terms of biological role, part of the high-affinity ATP-driven potassium transport (or Kdp) system, which catalyzes the hydrolysis of ATP coupled with the electrogenic transport of potassium into the cytoplasm. This subunit acts as a catalytic chaperone that increases the ATP-binding affinity of the ATP-hydrolyzing subunit KdpB by the formation of a transient KdpB/KdpC/ATP ternary complex. The protein is Potassium-transporting ATPase KdpC subunit of Myxococcus xanthus (strain DK1622).